The sequence spans 287 residues: tRNA selenocysteine 1-associated protein 1 (287 aa).

2 RRM domains span residues 3–86 (ASLW…YATY) and 96–175 (YSLF…VAIP).

Belongs to the RRM TRSPAP family. In terms of assembly, component of the tRNA(Sec) complex composed at least of EEFSEC, SECISBP2, SEPHS1, SEPSECS, TRNAU1AP and tRNA(Sec). Found in a complex with tRNA(Sec). Interacts with SEPSECS. Associates with mRNP and/or polysomes. Found in a complex with EEFSEC, SECISBP2, TRNAU1AP and tRNA(Sec).

The protein resides in the nucleus. The protein localises to the cytoplasm. Functionally, involved in the early steps of selenocysteine biosynthesis and tRNA(Sec) charging to the later steps resulting in the cotranslational incorporation of selenocysteine into selenoproteins. Stabilizes the SECISBP2, EEFSEC and tRNA(Sec) complex. May be involved in the methylation of tRNA(Sec). Enhances efficiency of selenoproteins synthesis. This chain is tRNA selenocysteine 1-associated protein 1 (TRNAU1AP), found in Bos taurus (Bovine).